We begin with the raw amino-acid sequence, 958 residues long: MSQTPSLAQLQPADAFLRRHLGPDPAEQQAMLAFLGVSTRAELIVQTVPPAIRLNRPLELPAALDEQAALARLRGYAGLNQRWTSLIGMGYYGTVTPSVILRNVLENPGWYTAYTPYQPEIAQGRLEALLNFQQLTIDLTGLDLASASLLDEATAAAEAMALARRVAKARSNRFFVDAHCHPQTVSVLRTRAEAFGFELVVDEPDNLAAHAVFGALLQYPDSRGEIRDLRPLIEALHGQQALACVASDLLALLLLTPPGELGADVVLGSAQRFGVPMGYGGPHAAFFATREGYKRAMPGRIIGVSRDARGNPALRMALQTREQHIRREKANSNICTAQVLLANIASLYAVYHGPQELKRIAQRVQRLTALLAAGLKSKGLRRLNRHFFDTLTYEVGERQAAILERARAARVNLRVVDDRRLALSLDETCDAATLATLFEIFLGAGHGLDVAHLDGGAVADGIPAVLQRTSAYLQHPVFNAHHSETEMLRYLRQLEGKDLALNQAMIPLGSCTMKLNASSEMIPITWPEFAELHPFVPREQAEGYRRMIDELEAWLRAITGFDAICMQPNSGAQGEYAGLLAIRRYHQSRGDSQRDICLIPASAHGTNPASAIMASMRVVIVECDPRGNVDLDDLRLKAAEAGDRLSCLMITYPSTHGVYEEGIGEICEVVHRHGGQVYMDGANLNAQVGLARPADIGADVSHMNLHKTFCIPHGGGGPGMGPIGVKRHLAPFVANHPVIRVEGPNPLNDAVSATPWGSASILPISWMYIAMMGPQLADASEVAILSANYLANRLDGAFPVLYRGRNERVAHECILDLRPLKAQTGITEEDVAKRLMDYGFHAPTMSFPVPGTLMVEPTESESKAELDRFVEAMLSIRAEIGKVESGAWPAEDNPLKRAPHTLADVTGIWQRPYEIAEAVTPSEHARAFKYWPAVNRVDNVYGDRNLFCACVPLDDYRE.

Residue K707 is modified to N6-(pyridoxal phosphate)lysine.

This sequence belongs to the GcvP family. The glycine cleavage system is composed of four proteins: P, T, L and H. The cofactor is pyridoxal 5'-phosphate.

It carries out the reaction N(6)-[(R)-lipoyl]-L-lysyl-[glycine-cleavage complex H protein] + glycine + H(+) = N(6)-[(R)-S(8)-aminomethyldihydrolipoyl]-L-lysyl-[glycine-cleavage complex H protein] + CO2. Functionally, the glycine cleavage system catalyzes the degradation of glycine. The P protein binds the alpha-amino group of glycine through its pyridoxal phosphate cofactor; CO(2) is released and the remaining methylamine moiety is then transferred to the lipoamide cofactor of the H protein. This Pseudomonas aeruginosa (strain ATCC 15692 / DSM 22644 / CIP 104116 / JCM 14847 / LMG 12228 / 1C / PRS 101 / PAO1) protein is Glycine dehydrogenase (decarboxylating) 2 (gcvP2).